A 335-amino-acid polypeptide reads, in one-letter code: Mitochondrial amidoxime reducing component 2 (335 aa).

A mitochondrion-targeting transit peptide spans 1-35 (MGASSSSALARLGLPAQARPRWLGVAVLGLAAVAL). Glycyl lysine isopeptide (Lys-Gly) (interchain with G-Cter in ubiquitin) cross-links involve residues lysine 59, lysine 138, and lysine 144. Lysine 156 is modified (N6-acetyllysine; alternate). Lysine 156 is covalently cross-linked (Glycyl lysine isopeptide (Lys-Gly) (interchain with G-Cter in ubiquitin); alternate). Residues lysine 173, lysine 187, lysine 287, and lysine 294 each participate in a glycyl lysine isopeptide (Lys-Gly) (interchain with G-Cter in ubiquitin) cross-link. The MOSC domain occupies 188-334 (GRTSRKLLPT…LRVGDPVYRM (147 aa)).

In terms of assembly, component of a complex composed of cytochrome b5, NADH-cytochrome b5 reductase (CYB5R3) and MTARC2. Requires Mo-molybdopterin as cofactor. Post-translationally, ubiquitinated by PRKN during mitophagy, leading to its degradation and enhancement of mitophagy. Deubiquitinated by USP30.

It is found in the mitochondrion outer membrane. It localises to the peroxisome. It carries out the reaction N(omega)-hydroxy-L-arginine + 2 Fe(II)-[cytochrome b5] + 2 H(+) = L-arginine + 2 Fe(III)-[cytochrome b5] + H2O. Its function is as follows. Catalyzes the reduction of N-oxygenated molecules, acting as a counterpart of cytochrome P450 and flavin-containing monooxygenases in metabolic cycles. As a component of prodrug-converting system, reduces a multitude of N-hydroxylated prodrugs particularly amidoximes, leading to increased drug bioavailability. May be involved in mitochondrial N(omega)-hydroxy-L-arginine (NOHA) reduction, regulating endogenous nitric oxide levels and biosynthesis. Postulated to cleave the N-OH bond of N-hydroxylated substrates in concert with electron transfer from NADH to cytochrome b5 reductase then to cytochrome b5, the ultimate electron donor that primes the active site for substrate reduction. The chain is Mitochondrial amidoxime reducing component 2 (MTARC2) from Macaca fascicularis (Crab-eating macaque).